A 462-amino-acid polypeptide reads, in one-letter code: Argininosuccinate lyase (462 aa).

The protein belongs to the lyase 1 family. Argininosuccinate lyase subfamily.

It is found in the cytoplasm. It catalyses the reaction 2-(N(omega)-L-arginino)succinate = fumarate + L-arginine. Its pathway is amino-acid biosynthesis; L-arginine biosynthesis; L-arginine from L-ornithine and carbamoyl phosphate: step 3/3. This is Argininosuccinate lyase from Bacillus anthracis (strain A0248).